The following is a 560-amino-acid chain: Dihydroxy-acid dehydratase (560 aa).

Cysteine 52 contributes to the [2Fe-2S] cluster binding site. Aspartate 84 contributes to the Mg(2+) binding site. [2Fe-2S] cluster is bound at residue cysteine 125. Mg(2+)-binding residues include aspartate 126 and lysine 127. Lysine 127 is subject to N6-carboxylysine. Cysteine 197 provides a ligand contact to [2Fe-2S] cluster. Mg(2+) is bound at residue glutamate 449. The active-site Proton acceptor is the serine 475.

This sequence belongs to the IlvD/Edd family. Homodimer. [2Fe-2S] cluster serves as cofactor. Requires Mg(2+) as cofactor.

It carries out the reaction (2R)-2,3-dihydroxy-3-methylbutanoate = 3-methyl-2-oxobutanoate + H2O. The catalysed reaction is (2R,3R)-2,3-dihydroxy-3-methylpentanoate = (S)-3-methyl-2-oxopentanoate + H2O. The protein operates within amino-acid biosynthesis; L-isoleucine biosynthesis; L-isoleucine from 2-oxobutanoate: step 3/4. It participates in amino-acid biosynthesis; L-valine biosynthesis; L-valine from pyruvate: step 3/4. Its function is as follows. Functions in the biosynthesis of branched-chain amino acids. Catalyzes the dehydration of (2R,3R)-2,3-dihydroxy-3-methylpentanoate (2,3-dihydroxy-3-methylvalerate) into 2-oxo-3-methylpentanoate (2-oxo-3-methylvalerate) and of (2R)-2,3-dihydroxy-3-methylbutanoate (2,3-dihydroxyisovalerate) into 2-oxo-3-methylbutanoate (2-oxoisovalerate), the penultimate precursor to L-isoleucine and L-valine, respectively. This chain is Dihydroxy-acid dehydratase, found in Sulfurisphaera tokodaii (strain DSM 16993 / JCM 10545 / NBRC 100140 / 7) (Sulfolobus tokodaii).